We begin with the raw amino-acid sequence, 108 residues long: Small ribosomal subunit protein bS6 (108 aa).

Belongs to the bacterial ribosomal protein bS6 family.

Its function is as follows. Binds together with bS18 to 16S ribosomal RNA. The polypeptide is Small ribosomal subunit protein bS6 (Trichormus variabilis (strain ATCC 29413 / PCC 7937) (Anabaena variabilis)).